Here is a 285-residue protein sequence, read N- to C-terminus: Acetyl-coenzyme A carboxylase carboxyl transferase subunit beta (285 aa).

The CoA carboxyltransferase N-terminal domain occupies 29-285; it reads IMTKCPKCKK…ILKIHQEVSN (257 aa). Zn(2+)-binding residues include cysteine 33, cysteine 36, cysteine 52, and cysteine 55. A C4-type zinc finger spans residues 33–55; it reads CPKCKKIMYTKELNENLNVCFNC.

This sequence belongs to the AccD/PCCB family. As to quaternary structure, acetyl-CoA carboxylase is a heterohexamer composed of biotin carboxyl carrier protein (AccB), biotin carboxylase (AccC) and two subunits each of ACCase subunit alpha (AccA) and ACCase subunit beta (AccD). Zn(2+) serves as cofactor.

The protein localises to the cytoplasm. The catalysed reaction is N(6)-carboxybiotinyl-L-lysyl-[protein] + acetyl-CoA = N(6)-biotinyl-L-lysyl-[protein] + malonyl-CoA. Its pathway is lipid metabolism; malonyl-CoA biosynthesis; malonyl-CoA from acetyl-CoA: step 1/1. Functionally, component of the acetyl coenzyme A carboxylase (ACC) complex. Biotin carboxylase (BC) catalyzes the carboxylation of biotin on its carrier protein (BCCP) and then the CO(2) group is transferred by the transcarboxylase to acetyl-CoA to form malonyl-CoA. The sequence is that of Acetyl-coenzyme A carboxylase carboxyl transferase subunit beta from Staphylococcus epidermidis (strain ATCC 12228 / FDA PCI 1200).